Reading from the N-terminus, the 505-residue chain is Probable alpha-L-arabinofuranosidase C (505 aa).

Residues Asn-152, Asn-269, and Asn-438 are each glycosylated (N-linked (GlcNAc...) asparagine).

Belongs to the glycosyl hydrolase 51 family.

Its subcellular location is the secreted. The catalysed reaction is Hydrolysis of terminal non-reducing alpha-L-arabinofuranoside residues in alpha-L-arabinosides.. The protein operates within glycan metabolism; L-arabinan degradation. Functionally, alpha-L-arabinofuranosidase involved in the degradation of arabinoxylan, a major component of plant hemicellulose. Acts only on small linear 1,5-alpha-linked L-arabinofuranosyl oligosaccharides. The polypeptide is Probable alpha-L-arabinofuranosidase C (abfC) (Aspergillus clavatus (strain ATCC 1007 / CBS 513.65 / DSM 816 / NCTC 3887 / NRRL 1 / QM 1276 / 107)).